The primary structure comprises 215 residues: Cytidylate kinase (215 aa).

ATP is bound at residue 10 to 18 (GPAASGKGT).

The protein belongs to the cytidylate kinase family. Type 1 subfamily.

It is found in the cytoplasm. The enzyme catalyses CMP + ATP = CDP + ADP. The catalysed reaction is dCMP + ATP = dCDP + ADP. The protein is Cytidylate kinase of Bartonella quintana (strain Toulouse) (Rochalimaea quintana).